Consider the following 324-residue polypeptide: Delta-aminolevulinic acid dehydratase (324 aa).

Zn(2+)-binding residues include Cys120, Cys122, and Cys130. Lys195 (schiff-base intermediate with substrate) is an active-site residue. Residues Arg205 and Arg216 each contribute to the 5-aminolevulinate site. Glu232 is a binding site for Mg(2+). The Schiff-base intermediate with substrate role is filled by Lys247. 5-aminolevulinate is bound by residues Ser273 and Tyr312.

Belongs to the ALAD family. In terms of assembly, homooctamer. It depends on Zn(2+) as a cofactor.

It carries out the reaction 2 5-aminolevulinate = porphobilinogen + 2 H2O + H(+). It functions in the pathway porphyrin-containing compound metabolism; protoporphyrin-IX biosynthesis; coproporphyrinogen-III from 5-aminolevulinate: step 1/4. Its activity is regulated as follows. Allosteric enzyme. Stimulated by magnesium ions. Catalyzes an early step in the biosynthesis of tetrapyrroles. Binds two molecules of 5-aminolevulinate per subunit, each at a distinct site, and catalyzes their condensation to form porphobilinogen. This is Delta-aminolevulinic acid dehydratase (hemB) from Escherichia coli (strain K12).